Here is a 216-residue protein sequence, read N- to C-terminus: 3-keto-L-gulonate-6-phosphate decarboxylase UlaD (216 aa).

Aspartate 11 contacts substrate. Mg(2+) contacts are provided by glutamate 33 and aspartate 62. Arginine 192 is a binding site for substrate.

Belongs to the HPS/KGPDC family. KGPDC subfamily. In terms of assembly, homodimer. Mg(2+) is required as a cofactor.

The catalysed reaction is 3-dehydro-L-gulonate 6-phosphate + H(+) = L-xylulose 5-phosphate + CO2. The protein operates within cofactor degradation; L-ascorbate degradation; D-xylulose 5-phosphate from L-ascorbate: step 2/4. Catalyzes the decarboxylation of 3-keto-L-gulonate-6-P into L-xylulose-5-P. Is involved in the anaerobic L-ascorbate utilization. This is 3-keto-L-gulonate-6-phosphate decarboxylase UlaD from Salmonella choleraesuis (strain SC-B67).